The primary structure comprises 503 residues: MEEFQGYLELYRSQQHDFLYPLIFREYIYALAHDRGLNRSVLLDNVGYDKKSSLLIIKRLISRMYQQNHFLISVNDSNQNKFFGYNKNLYSQMISEGFAVIVEIPFSLRLVSSLKETETVKSYNLRSIHSIFPFFEDKFPHLNYASDVLIPYPIHLEILVQTLRYCVKDPSSLHLLRLFLHEYYNWNTLITPKKSIFAKSNQRLFLLLYNSYVCEYESILLFLRNQSNHLRLTSSGILFERIRFYEKIKYPVKEVFANDFPATLWFFKDPFIQYVRYQGKSILASKDTPLLMNKWKYYLVHFWQCHFYVWSQPGRIHINQLSKHSFDFLGYLSSIRPNISVVRSQLLENSFLMDNAMKKLDTLFPIIPMIGSLAKVKFCNTSGHPISKSSWADSSDSDIIDRFVRIGGNLSHYYSGSSKKKSLYRIKYILRLSCVKTLARKHKSTVRTFLKRLGPKLLDEFFTEEEQIFSLLFPRTSSTLKRFYRGRIWYLDILCINDLVNHE.

Belongs to the intron maturase 2 family. MatK subfamily.

It is found in the plastid. Its subcellular location is the chloroplast. Functionally, usually encoded in the trnK tRNA gene intron. Probably assists in splicing its own and other chloroplast group II introns. The polypeptide is Maturase K (Rosa acicularis (Prickly rose)).